The following is a 757-amino-acid chain: RNA-directed RNA polymerase catalytic subunit (757 aa).

The segment at 50-82 (SEKGKWTTNTETGAPQLNPIDGPLPEDNEPSGY) is disordered. Residues 55–64 (WTTNTETGAP) show a composition bias toward polar residues. Short sequence motifs (nuclear localization signal) lie at residues 187 to 195 (RKRRVRDNM) and 203 to 216 (RTIG…NKRS). Residues 249 to 256 (RGFVYFVE) are promoter-binding site. Residues 286–483 (VRKMMTNSQD…GINMSKKKSY (198 aa)) form the RdRp catalytic domain.

The protein belongs to the influenza viruses polymerase PB1 family. Influenza RNA polymerase is composed of three subunits: PB1, PB2 and PA. Interacts (via N-terminus) with PA (via C-terminus). Interacts (via C-terminus) with PB2 (via N-terminus); this interaction is essential for transcription initiation. Post-translationally, phosphorylated by host PRKCA.

The protein resides in the host nucleus. The protein localises to the host cytoplasm. The catalysed reaction is RNA(n) + a ribonucleoside 5'-triphosphate = RNA(n+1) + diphosphate. Its function is as follows. RNA-dependent RNA polymerase which is responsible for replication and transcription of virus RNA segments. The transcription of viral mRNAs occurs by a unique mechanism called cap-snatching. 5' methylated caps of cellular mRNAs are cleaved after 10-13 nucleotides by PA. In turn, these short capped RNAs are used as primers by PB1 for transcription of viral mRNAs. During virus replication, PB1 initiates RNA synthesis and copy vRNA into complementary RNA (cRNA) which in turn serves as a template for the production of more vRNAs. The protein is RNA-directed RNA polymerase catalytic subunit of Aves (Human).